Consider the following 87-residue polypeptide: NADH-ubiquinone oxidoreductase chain 4L (87 aa).

The next 3 helical transmembrane spans lie at 1–21, 22–42, and 57–77; these read MNLS…NRKN, IILM…LVLI, and LYII…LVAF.

This sequence belongs to the complex I subunit 4L family. Core subunit of respiratory chain NADH dehydrogenase (Complex I) which is composed of 45 different subunits.

The protein resides in the mitochondrion inner membrane. It catalyses the reaction a ubiquinone + NADH + 5 H(+)(in) = a ubiquinol + NAD(+) + 4 H(+)(out). Core subunit of the mitochondrial membrane respiratory chain NADH dehydrogenase (Complex I) which catalyzes electron transfer from NADH through the respiratory chain, using ubiquinone as an electron acceptor. The polypeptide is NADH-ubiquinone oxidoreductase chain 4L (ND4L) (Moniliophthora perniciosa (strain FA553 / isolate CP02) (Witches'-broom disease fungus)).